A 230-amino-acid polypeptide reads, in one-letter code: Prolactin-6A1 (230 aa).

The first 29 residues, 1-29 (MLSLSQPCFSGTLLMLLASNFLLWKNVAP), serve as a signal peptide directing secretion. The N-linked (GlcNAc...) asparagine glycan is linked to Asn-57. Intrachain disulfides connect Cys-89-Cys-205 and Cys-222-Cys-230.

It belongs to the somatotropin/prolactin family. In terms of tissue distribution, expressed in both placenta and decidual tissues. Detected first in deciduals cells early in gestation and in trophoblasts later in pregnancy.

It localises to the secreted. The polypeptide is Prolactin-6A1 (Prl6a1) (Mus musculus (Mouse)).